The chain runs to 352 residues: Ion-translocating oxidoreductase complex subunit D (352 aa).

5 helical membrane-spanning segments follow: residues 20–40 (IMLLVLLAAVPGIAAQLWFFG), 42–62 (GTLVQILLASVSALLAEALVL), 78–109 (ALLTGLLLAVSIPPLAPWWMVVLGTVFAVIIA), 123–143 (PAMIGYVVLLISFPVQMTSWL), and 148–168 (IAVNIPGFIDAIQVIFSGHTA). Thr187 is modified (FMN phosphoryl threonine). 4 helical membrane-spanning segments follow: residues 214-234 (ILAGAGWQWVNLAWLAGGVWL), 242-262 (WHIPLSFLVTLALCATLGWLF), 267-287 (LAAPQIHLLSGATMLGAFFIL), and 301-318 (LMFGALAGLLVWLIRSFG).

Belongs to the NqrB/RnfD family. As to quaternary structure, the complex is composed of six subunits: RsxA, RsxB, RsxC, RsxD, RsxE and RsxG. Requires FMN as cofactor.

It localises to the cell inner membrane. Its function is as follows. Part of a membrane-bound complex that couples electron transfer with translocation of ions across the membrane. Required to maintain the reduced state of SoxR. This is Ion-translocating oxidoreductase complex subunit D from Shigella flexneri serotype 5b (strain 8401).